The chain runs to 667 residues: Receptor for retinol uptake STRA6 (667 aa).

A compositionally biased stretch (polar residues) spans 1 to 13; the sequence is MSSQPAGNQTSPG. Residues 1–22 form a disordered region; sequence MSSQPAGNQTSPGPTEDYSYGS. The Extracellular portion of the chain corresponds to 1-50; that stretch reads MSSQPAGNQTSPGPTEDYSYGSWYIDEPQGGEELQPEGEVPSCHTSIPPS. Residue N8 is glycosylated (N-linked (GlcNAc...) asparagine). Residues 51–71 form a helical membrane-spanning segment; it reads LYHACLASLSILVLLLLAMLV. At 72–98 the chain is on the cytoplasmic side; the sequence is RRRQLWPDCVRGRPGLPSPVDFLAGDR. The helical transmembrane segment at 99-119 threads the bilayer; the sequence is PQAVPAAVFVVLFSSLCLLLP. Over 120 to 144 the chain is Extracellular; sequence DEDPLPFLTLASAPSQDGKTEAPRG. Residues 145–165 form a helical membrane-spanning segment; that stretch reads AWKILGLFYYAALCYPLAACA. At 166 to 168 the chain is on the cytoplasmic side; it reads TAG. A helical transmembrane segment spans residues 169 to 189; sequence HTAAHLLGSTLSWAHLGVQVW. Residues 190-205 lie on the Extracellular side of the membrane; the sequence is QRAECPQVPKIYKYYS. Residues 206-226 traverse the membrane as a helical segment; sequence LLASLPLLLGLGFLSLWYPVQ. Residues 227 to 295 lie on the Cytoplasmic side of the membrane; that stretch reads LVRSFSCRTG…PQPGFRLPLK (69 aa). The interval 235-293 is interaction with RBP1; it reads TGAGSKGLQSSYSEEYLRNLLCRKKLGSSSHTSKHGFLSWAWVCLRHCIYTPQPGFRLP. Residues 296-316 traverse the membrane as a helical segment; that stretch reads LVLSATLTGTAIYQVALLLLV. The Extracellular portion of the chain corresponds to 317–367; sequence GMVPNIQKVRAGVTTDVSYLLAGFGIVLSEDKQEVVELVKHHLWALEVCYI. The helical transmembrane segment at 368–388 threads the bilayer; the sequence is SALVLSCSLTFLVLMRSLVTH. Residues 389-422 are Cytoplasmic-facing; the sequence is RTNLRALHRGAALDSSPLHRSPHPSRRAIFCWMS. Residues 423–443 form a helical membrane-spanning segment; the sequence is FSAYQTAFICLGLLVQQIIFF. Over 444–473 the chain is Extracellular; the sequence is LGTTALAFLVLMPVLHGRNLLLFRSLESSW. Residues 474 to 494 form a helical membrane-spanning segment; the sequence is PFWLTLALAVILQSMAAHWVF. The Cytoplasmic segment spans residues 495–509; it reads LETHDGHPQLTNRRV. Residues 510–547 constitute an intramembrane region (helical); the sequence is LYAATFLLFPLNVLVGAMVATWRVLLSALYNAIHLGQM. At 548 to 667 the chain is on the cytoplasmic side; sequence DLSLLPPRAA…ALLGANGAQP (120 aa). At Y643 the chain carries Phosphotyrosine.

Homodimer. Interacts with JAK2 and STAT5. Interacts (via extracellular domains) with RBP4. Interacts (via cytoplasmic domains) with RBP1. In terms of processing, phosphorylated on tyrosine residues in response to RBP4 binding. Phosphorylation requires the presence of LRAT, suggesting it may be triggered by the uptake of retinol that is then metabolized within the cell to retinoids that function as signaling molecules.

It is found in the cell membrane. Its function is as follows. Functions as a retinol transporter. Accepts all-trans retinol from the extracellular retinol-binding protein RBP4, facilitates retinol transport across the cell membrane, and then transfers retinol to the cytoplasmic retinol-binding protein RBP1. Retinol uptake is enhanced by LRAT, an enzyme that converts retinol to all-trans retinyl esters, the storage forms of vitamin A. Contributes to the activation of a signaling cascade that depends on retinol transport and LRAT-dependent generation of retinol metabolites that then trigger activation of JAK2 and its target STAT5, and ultimately increase the expression of SOCS3 and inhibit cellular responses to insulin. Important for the homeostasis of vitamin A and its derivatives, such as retinoic acid. STRA6-mediated transport is particularly important in the eye, and under conditions of dietary vitamin A deficiency. Does not transport retinoic acid. This is Receptor for retinol uptake STRA6 (STRA6) from Pongo abelii (Sumatran orangutan).